The primary structure comprises 460 residues: UDP-N-acetylmuramoylalanine--D-glutamate ligase (460 aa).

115–121 (GTDGKTT) lines the ATP pocket.

Belongs to the MurCDEF family.

The protein localises to the cytoplasm. It carries out the reaction UDP-N-acetyl-alpha-D-muramoyl-L-alanine + D-glutamate + ATP = UDP-N-acetyl-alpha-D-muramoyl-L-alanyl-D-glutamate + ADP + phosphate + H(+). It participates in cell wall biogenesis; peptidoglycan biosynthesis. In terms of biological role, cell wall formation. Catalyzes the addition of glutamate to the nucleotide precursor UDP-N-acetylmuramoyl-L-alanine (UMA). The protein is UDP-N-acetylmuramoylalanine--D-glutamate ligase of Chlorobium luteolum (strain DSM 273 / BCRC 81028 / 2530) (Pelodictyon luteolum).